A 302-amino-acid chain; its full sequence is tRNA dimethylallyltransferase (302 aa).

9–16 (GPTGTGKS) contributes to the ATP binding site. Residue 11–16 (TGTGKS) coordinates substrate.

This sequence belongs to the IPP transferase family. As to quaternary structure, monomer. It depends on Mg(2+) as a cofactor.

It catalyses the reaction adenosine(37) in tRNA + dimethylallyl diphosphate = N(6)-dimethylallyladenosine(37) in tRNA + diphosphate. Its function is as follows. Catalyzes the transfer of a dimethylallyl group onto the adenine at position 37 in tRNAs that read codons beginning with uridine, leading to the formation of N6-(dimethylallyl)adenosine (i(6)A). In Mycolicibacterium smegmatis (strain ATCC 700084 / mc(2)155) (Mycobacterium smegmatis), this protein is tRNA dimethylallyltransferase.